The sequence spans 21 residues: C-phycocyanin alpha subunit (21 aa).

Belongs to the phycobiliprotein family. Heterodimer of an alpha and a beta subunit, which further assembles into trimers and the trimers into hexamers. Contains one covalently linked bilin chromophore.

It is found in the cellular thylakoid membrane. Light-harvesting photosynthetic bile pigment-protein from the phycobiliprotein complex (phycobilisome, PBS). Phycocyanin is the major phycobiliprotein in the PBS rod. The chain is C-phycocyanin alpha subunit from Anabaena sp. (strain L31).